We begin with the raw amino-acid sequence, 553 residues long: Coiled-coil domain-containing protein 85A (553 aa).

Over residues 1–28 (MSKAAGGAAAAAAAAESCSPAPAGSSAA) the composition is skewed to low complexity. Positions 1–37 (MSKAAGGAAAAAAAAESCSPAPAGSSAAPPAPVEDLS) are disordered. Coiled coils occupy residues 43–109 (ELLQ…RDLC) and 137–169 (MHKEVALYLQKLKDLEVKQEEVVKENMELKELC). Disordered regions lie at residues 203–414 (YVRD…GMNE), 433–461 (ENRMLPQASQNRRQPPTRNSSNMEKGWGS), and 491–518 (SGADGSNSSPNSAASFSGHATPSQQPEP). A compositionally biased stretch (low complexity) spans 209 to 220 (DGSSTSSTGSTD). Residues 236–260 (HLQKPRSEGSPEHSKHRSASPEHPQ) are compositionally biased toward basic and acidic residues. Gly residues predominate over residues 376–389 (GGSGGSGGSGGGSR). The segment covering 391-403 (GTLRRQAQEDGSP) has biased composition (basic and acidic residues). Positions 412–443 (MNESTLSYVRQLEARVRQLEEENRMLPQASQN) form a coiled coil. Positions 439–455 (QASQNRRQPPTRNSSNM) are enriched in polar residues. The span at 491 to 508 (SGADGSNSSPNSAASFSG) shows a compositional bias: low complexity. An Asymmetric dimethylarginine modification is found at R541.

The protein belongs to the CCDC85 family. As to quaternary structure, may interact with ARVCF; CTNND1; CTNND2 and PKP4.

It is found in the cell junction. The protein localises to the adherens junction. May play a role in cell-cell adhesion and epithelium development through its interaction with proteins of the beta-catenin family. This is Coiled-coil domain-containing protein 85A (CCDC85A) from Homo sapiens (Human).